The following is a 500-amino-acid chain: Small ribosomal subunit protein uS3m (500 aa).

It belongs to the universal ribosomal protein uS3 family.

The protein localises to the mitochondrion. This is Small ribosomal subunit protein uS3m (RPS3) from Prototheca wickerhamii.